A 64-amino-acid chain; its full sequence is Large ribosomal subunit protein bL35 (64 aa).

Basic residues-rich tracts occupy residues 1–15 (MPKQ…KRFR) and 23–43 (VRQK…RTRR). Residues 1 to 64 (MPKQKSHSGA…AGRIKRLLAR (64 aa)) form a disordered region.

This sequence belongs to the bacterial ribosomal protein bL35 family.

The sequence is that of Large ribosomal subunit protein bL35 from Frankia alni (strain DSM 45986 / CECT 9034 / ACN14a).